The primary structure comprises 119 residues: Thrombin-like enzyme TLBan (119 aa).

A Peptidase S1 domain is found at 1 to 112 (VIGGDECNIN…YLLWIQSIIA (112 aa)). Residues histidine 40 and aspartate 59 each act as charge relay system in the active site. Residues cysteine 54 and cysteine 118 are joined by a disulfide bond.

In terms of assembly, monomer. Contains both N-linked carbohydrates and sialic acid. In terms of tissue distribution, expressed by the venom gland.

It localises to the secreted. With respect to regulation, strongly inhibited by PMSF and slightly inhibited by EDTA and soybean trypsin inhibitor. Thrombin-like snake venom serine protease, with high clotting activity in vitro. Also has fibrinogenolytic ability, showing a fast degradation of fibrinogen Aalpha chain (FGA), a slow degradation of Bbeta chain (FGB) and no degradation of gamma chain. Also causes platelet aggregation in platelet rich plasma (PRP) and washed platelet suspension. In Bothrocophias andianus (Andean lancehead), this protein is Thrombin-like enzyme TLBan.